Here is a 171-residue protein sequence, read N- to C-terminus: Myelin basic protein (171 aa).

Residue A1 is modified to N-acetylalanine. Residues 1–12 show a composition bias toward basic residues; sequence ASQKRPSQRHGS. Positions 1–171 are disordered; that stretch reads ASQKRPSQRH…SRSGSPMARR (171 aa). Residues S7 and S12 each carry the phosphoserine modification. Y14 is modified (phosphotyrosine). S19 is subject to Phosphoserine. T20 is modified (phosphothreonine). Citrulline is present on residues R25 and R31. The residue at position 35 (T35) is a Phosphothreonine. S39 is subject to Phosphoserine. R42 and R48 each carry omega-N-methylarginine. Position 55 is a phosphoserine (S55). Phosphothreonine is present on T66. Position 68 is a phosphotyrosine (Y68). Phosphothreonine occurs at positions 95 and 98. The residue at position 103 (Q103) is a Deamidated glutamine. R107 carries the post-translational modification Omega-N-methylarginine; alternate. Position 107 is a symmetric dimethylarginine; alternate (R107). A Phosphoserine modification is found at S115. At K122 the chain carries N6-acetyllysine. Residue R130 is modified to Citrulline. Q148 carries the post-translational modification Deamidated glutamine. R160 carries the post-translational modification Citrulline. The residue at position 162 (S162) is a Phosphoserine. S166 bears the Phosphoserine; by UHMK1 mark. R171 is subject to Citrulline.

Belongs to the myelin basic protein family. In terms of assembly, homodimer. Post-translationally, as in other animals, several charge isomers may be produced as a result of optional post-translational modifications, such as phosphorylation of serine or threonine residues, deamidation of glutamine or asparagine residues, citrullination and methylation of arginine residues. Phosphorylated by TAOK2, VRK2, MAPK11, MAPK12, MAPK14 and MINK1. In terms of processing, proteolytically cleaved in B cell lysosomes by cathepsin CTSG which degrades the major immunogenic MBP epitope and prevents the activation of MBP-specific autoreactive T cells.

It localises to the myelin membrane. In terms of biological role, is, with PLP, the most abundant protein component of the myelin membrane in the CNS. Has a role in both the formation and stabilization of this compact multilayer arrangement of bilayers. Each splice variant and charge isomer may have a specialized function in the assembly of an optimized, biochemically functional myelin membrane. This Sus scrofa (Pig) protein is Myelin basic protein (MBP).